Reading from the N-terminus, the 220-residue chain is MFDIGFSELLLVLVIGLVVLGPERLPVAVRTVSGWIRTLRSLAATVQNELAQELKLQELQDSLKKVEQAGLQNLTPELKASMDELKEAAEALKRSYHVDAGSEAPHTIHNPLVTEPEAIHDGVTPAEPATQVSALAQAPNILEAGTASVVDSVVEAAPVTTVKSVVQGEVLVKSTPVQEVGLADVMDKPVTKQQIDTIDSHGTDLSSAGPSRIHQPGGDQ.

The chain crosses the membrane as a helical span at residues 1-21 (MFDIGFSELLLVLVIGLVVLG). Positions 192–220 (KQQIDTIDSHGTDLSSAGPSRIHQPGGDQ) are disordered.

This sequence belongs to the TatB family. The Tat system comprises two distinct complexes: a TatABC complex, containing multiple copies of TatA, TatB and TatC subunits, and a separate TatA complex, containing only TatA subunits. Substrates initially bind to the TatABC complex, which probably triggers association of the separate TatA complex to form the active translocon.

It localises to the cell inner membrane. Part of the twin-arginine translocation (Tat) system that transports large folded proteins containing a characteristic twin-arginine motif in their signal peptide across membranes. Together with TatC, TatB is part of a receptor directly interacting with Tat signal peptides. TatB may form an oligomeric binding site that transiently accommodates folded Tat precursor proteins before their translocation. In Yersinia pestis bv. Antiqua (strain Antiqua), this protein is Sec-independent protein translocase protein TatB.